Consider the following 90-residue polypeptide: Putative F-box protein At5g16285 (90 aa).

One can recognise an F-box domain in the interval 1-46 (MRIESLLQHDVVERILERLAVNSLPRFKAVSKQWKSTIESQFFQGK).

The protein is Putative F-box protein At5g16285 of Arabidopsis thaliana (Mouse-ear cress).